A 389-amino-acid chain; its full sequence is Protein OSCP1 (389 aa).

In terms of tissue distribution, expressed predominantly in testis, also found in placenta and to a lesser extent in thymus and small intestine; abundantly expressed in tumor-derived cell lines. Ubiquitously expressed.

It is found in the basal cell membrane. In terms of biological role, may be involved in drug clearance in the placenta. This Homo sapiens (Human) protein is Protein OSCP1 (OSCP1).